Consider the following 404-residue polypeptide: MAMVTGGWGGPGGDTNGVDKAGGYPRAAEDDSASPPGAASDAEPGDEERPGLQVDCVVCGDKSSGKHYGVFTCEGCKSFFKRSIRRNLSYTCRSNRDCQIDQHHRNQCQYCRLKKCFRVGMRKEAVQRGRIPHSLPGAVAASSGSPPGSALAAVASGGDLFPGQPVSELIAQLLRAEPYPAAAGRFGAGGGAAGAVLGIDNVCELAARLLFSTVEWARHAPFFPELPVADQVALLRLSWSELFVLNAAQAALPLHTAPLLAAAGLHAAPMAAERAVAFMDQVRAFQEQVDKLGRLQVDSAEYGCLKAIALFTPDACGLSDPAHVESLQEKAQVALTEYVRAQYPSQPQRFGRLLLRLPALRAVPASLISQLFFMRLVGKTPIETLIRDMLLSGSTFNWPYGSGQ.

Gly residues predominate over residues 1 to 15 (MAMVTGGWGGPGGDT). Residues 1–49 (MAMVTGGWGGPGGDTNGVDKAGGYPRAAEDDSASPPGAASDAEPGDEER) form a disordered region. Residues 33 to 42 (ASPPGAASDA) show a composition bias toward low complexity. 2 positions are modified to phosphoserine: Ser-34 and Ser-40. Residues 53–128 (QVDCVVCGDK…VGMRKEAVQR (76 aa)) constitute a DNA-binding region (nuclear receptor). The NR C4-type zinc finger occupies 56 to 76 (CVVCGDKSSGKHYGVFTCEGC). Phosphoserine is present on Ser-83. An NR C4-type zinc finger spans residues 92–116 (CRSNRDCQIDQHHRNQCQYCRLKKC). Residues 165–393 (PVSELIAQLL…TLIRDMLLSG (229 aa)) enclose the NR LBD domain. The important for dimerization stretch occupies residues 327–404 (LQEKAQVALT…TFNWPYGSGQ (78 aa)).

The protein belongs to the nuclear hormone receptor family. NR2 subfamily. In terms of assembly, binds DNA as dimer; homodimer and heterodimer with NR2F2 and probably NR2F1. Interacts with THRB. Expressed in heart, placenta, liver, skeletal muscle, kidney and pancreas.

It is found in the nucleus. Transcription factor predominantly involved in transcriptional repression. Binds to promoter/enhancer response elements that contain the imperfect 5'-AGGTCA-3' direct or inverted repeats with various spacings which are also recognized by other nuclear hormone receptors. Involved in modulation of hormonal responses. Represses transcriptional activity of the lutropin-choriogonadotropic hormone receptor/LHCGR gene, the renin/REN gene and the oxytocin-neurophysin/OXT gene. Represses the triiodothyronine-dependent and -independent transcriptional activity of the thyroid hormone receptor gene in a cell type-specific manner. The corepressing function towards thyroid hormone receptor beta/THRB involves at least in part the inhibition of THRB binding to triiodothyronine response elements (TREs) by NR2F6. Inhibits NFATC transcription factor DNA binding and subsequently its transcriptional activity. Acts as transcriptional repressor of IL-17 expression in Th-17 differentiated CD4(+) T cells and may be involved in induction and/or maintenance of peripheral immunological tolerance and autoimmunity. Involved in development of forebrain circadian clock; is required early in the development of the locus coeruleus (LC). The chain is Nuclear receptor subfamily 2 group F member 6 (NR2F6) from Homo sapiens (Human).